The primary structure comprises 35 residues: Photosystem II reaction center protein T (35 aa).

The helical transmembrane segment at 3–23 threads the bilayer; the sequence is ALVYTFLLVSTLGIIFFAIFF.

Belongs to the PsbT family. As to quaternary structure, PSII is composed of 1 copy each of membrane proteins PsbA, PsbB, PsbC, PsbD, PsbE, PsbF, PsbH, PsbI, PsbJ, PsbK, PsbL, PsbM, PsbT, PsbY, PsbZ, Psb30/Ycf12, at least 3 peripheral proteins of the oxygen-evolving complex and a large number of cofactors. It forms dimeric complexes.

The protein resides in the plastid. The protein localises to the chloroplast thylakoid membrane. In terms of biological role, found at the monomer-monomer interface of the photosystem II (PS II) dimer, plays a role in assembly and dimerization of PSII. PSII is a light-driven water plastoquinone oxidoreductase, using light energy to abstract electrons from H(2)O, generating a proton gradient subsequently used for ATP formation. This Nelumbo lutea (American lotus) protein is Photosystem II reaction center protein T.